The sequence spans 218 residues: Testis expressed protein 56 (218 aa).

The chain is Testis expressed protein 56 (Tex56) from Rattus norvegicus (Rat).